The sequence spans 298 residues: Diphthine methyl ester synthase (298 aa).

Residues Leu9, Asp85, Gly88, 113–114, Leu164, Leu222, and His247 contribute to the S-adenosyl-L-methionine site; that span reads SV.

This sequence belongs to the diphthine synthase family.

The protein localises to the cytoplasm. It catalyses the reaction 2-[(3S)-amino-3-carboxypropyl]-L-histidyl-[translation elongation factor 2] + 4 S-adenosyl-L-methionine = diphthine methyl ester-[translation elongation factor 2] + 4 S-adenosyl-L-homocysteine + 3 H(+). The protein operates within protein modification; peptidyl-diphthamide biosynthesis. Functionally, S-adenosyl-L-methionine-dependent methyltransferase that catalyzes four methylations of the modified target histidine residue in translation elongation factor 2 (EF-2), to form an intermediate called diphthine methyl ester. The four successive methylation reactions represent the second step of diphthamide biosynthesis. The chain is Diphthine methyl ester synthase (DPH5) from Eremothecium gossypii (strain ATCC 10895 / CBS 109.51 / FGSC 9923 / NRRL Y-1056) (Yeast).